The primary structure comprises 405 residues: Glucoside xylosyltransferase 1 (405 aa).

At 1 to 2 the chain is on the cytoplasmic side; that stretch reads MR. The helical; Signal-anchor for type II membrane protein transmembrane segment at 3–23 threads the bilayer; it reads IYLRTFGLCIVVALLSLVFLF. The Lumenal portion of the chain corresponds to 24-405; the sequence is SKHDEGSFSA…RLQRATPPGD (382 aa). The interval 46–65 is disordered; sequence SFNGAKAKQRPTATTSHRDV. 4 N-linked (GlcNAc...) asparagine glycosylation sites follow: Asn202, Asn243, Asn277, and Asn372.

Belongs to the glycosyltransferase 8 family.

The protein localises to the membrane. It catalyses the reaction 3-O-(beta-D-glucosyl)-L-seryl-[EGF-like domain protein] + UDP-alpha-D-xylose = 3-O-[alpha-D-xylosyl-(1-&gt;3)-beta-D-glucosyl]-L-seryl-[EGF-like domain protein] + UDP + H(+). Glycosyltransferase which elongates the O-linked glucose attached to EGF-like repeats in the extracellular domain of Notch proteins by catalyzing the addition of xylose. This Danio rerio (Zebrafish) protein is Glucoside xylosyltransferase 1 (gxylt1).